Here is a 472-residue protein sequence, read N- to C-terminus: Ribulose bisphosphate carboxylase large chain 1 (472 aa).

2 residues coordinate substrate: Asn115 and Thr165. The active-site Proton acceptor is the Lys167. Lys169 provides a ligand contact to substrate. Mg(2+) is bound by residues Lys193, Asp195, and Glu196. Lys193 is subject to N6-carboxylysine. The active-site Proton acceptor is His286. Residues Arg287, His319, and Ser371 each contribute to the substrate site.

Belongs to the RuBisCO large chain family. Type I subfamily. As to quaternary structure, heterohexadecamer of 8 large chains and 8 small chains. Requires Mg(2+) as cofactor.

It carries out the reaction 2 (2R)-3-phosphoglycerate + 2 H(+) = D-ribulose 1,5-bisphosphate + CO2 + H2O. The catalysed reaction is D-ribulose 1,5-bisphosphate + O2 = 2-phosphoglycolate + (2R)-3-phosphoglycerate + 2 H(+). RuBisCO catalyzes two reactions: the carboxylation of D-ribulose 1,5-bisphosphate, the primary event in carbon dioxide fixation, as well as the oxidative fragmentation of the pentose substrate. Both reactions occur simultaneously and in competition at the same active site. In Hydrogenovibrio marinus, this protein is Ribulose bisphosphate carboxylase large chain 1.